A 186-amino-acid polypeptide reads, in one-letter code: ATP-dependent protease subunit HslV (186 aa).

The active site involves T14. Positions 168, 171, and 174 each coordinate Na(+).

It belongs to the peptidase T1B family. HslV subfamily. In terms of assembly, a double ring-shaped homohexamer of HslV is capped on each side by a ring-shaped HslU homohexamer. The assembly of the HslU/HslV complex is dependent on binding of ATP.

The protein resides in the cytoplasm. The enzyme catalyses ATP-dependent cleavage of peptide bonds with broad specificity.. Its activity is regulated as follows. Allosterically activated by HslU binding. Its function is as follows. Protease subunit of a proteasome-like degradation complex believed to be a general protein degrading machinery. This Methylorubrum extorquens (strain CM4 / NCIMB 13688) (Methylobacterium extorquens) protein is ATP-dependent protease subunit HslV.